The chain runs to 402 residues: Nicotinate phosphoribosyltransferase (402 aa).

Phosphohistidine; by autocatalysis is present on histidine 226.

The protein belongs to the NAPRTase family. Transiently phosphorylated on a His residue during the reaction cycle. Phosphorylation strongly increases the affinity for substrates and increases the rate of nicotinate D-ribonucleotide production. Dephosphorylation regenerates the low-affinity form of the enzyme, leading to product release.

It carries out the reaction nicotinate + 5-phospho-alpha-D-ribose 1-diphosphate + ATP + H2O = nicotinate beta-D-ribonucleotide + ADP + phosphate + diphosphate. Its pathway is cofactor biosynthesis; NAD(+) biosynthesis; nicotinate D-ribonucleotide from nicotinate: step 1/1. Catalyzes the synthesis of beta-nicotinate D-ribonucleotide from nicotinate and 5-phospho-D-ribose 1-phosphate at the expense of ATP. The polypeptide is Nicotinate phosphoribosyltransferase (Chromobacterium violaceum (strain ATCC 12472 / DSM 30191 / JCM 1249 / CCUG 213 / NBRC 12614 / NCIMB 9131 / NCTC 9757 / MK)).